We begin with the raw amino-acid sequence, 139 residues long: Protein GOS9 (139 aa).

A Jacalin-type lectin domain is found at 5–139 (LVKIGTWGGN…VDSIGVYVHI (135 aa)).

In terms of tissue distribution, expressed mainly in roots.

This is Protein GOS9 (GOS9) from Oryza sativa subsp. indica (Rice).